We begin with the raw amino-acid sequence, 409 residues long: Glucose-1-phosphate adenylyltransferase (409 aa).

Residues Gly-168, 183–184, and Ser-201 contribute to the alpha-D-glucose 1-phosphate site; that span reads EK.

It belongs to the bacterial/plant glucose-1-phosphate adenylyltransferase family. Homotetramer.

It catalyses the reaction alpha-D-glucose 1-phosphate + ATP + H(+) = ADP-alpha-D-glucose + diphosphate. Its pathway is glycan biosynthesis; glycogen biosynthesis. Its function is as follows. Involved in the biosynthesis of ADP-glucose, a building block required for the elongation reactions to produce glycogen. Catalyzes the reaction between ATP and alpha-D-glucose 1-phosphate (G1P) to produce pyrophosphate and ADP-Glc. This Corynebacterium glutamicum (strain R) protein is Glucose-1-phosphate adenylyltransferase.